Consider the following 590-residue polypeptide: Shugoshin (590 aa).

Residues M1–D20 are disordered. Residues E11–D20 are compositionally biased toward basic and acidic residues. The stretch at Q25 to T86 forms a coiled coil. 3 disordered regions span residues L133–E235, P291–K337, and R411–I550. Over residues S173 to K185 the composition is skewed to basic and acidic residues. A compositionally biased stretch (low complexity) spans P302 to S326. A compositionally biased stretch (basic residues) spans P328–K337. The span at K448–A459 shows a compositional bias: basic and acidic residues. Residues I513–P526 show a composition bias toward polar residues. A compositionally biased stretch (low complexity) spans S527–I550.

The protein belongs to the shugoshin family. Post-translationally, ubiquitinated by the anaphase promoting complex (APC) at the onset of anaphase, conducting to its degradation.

The protein localises to the chromosome. The protein resides in the centromere. It is found in the kinetochore. It localises to the cytoplasm. Its subcellular location is the cytoskeleton. The protein localises to the spindle pole. Plays a central role in chromosome cohesion during mitosis and meiosis divisions by preventing premature dissociation of cohesin complex from centromeres after prophase, when most of cohesin complex dissociates from chromosomes arms. Probably act by protecting REC8 and RAD21 from separase degradation during anaphase. Also acts as a spindle checkpoint component required for sensing tension between sister chromatids during mitosis, its degradation when they separate preventing cell cycle arrest and chromosome loss in anaphase, a time when sister chromatids are no longer under tension. This Saccharomyces cerevisiae (strain ATCC 204508 / S288c) (Baker's yeast) protein is Shugoshin (SGO1).